The following is an 81-amino-acid chain: Small ribosomal subunit protein uS17 (81 aa).

This sequence belongs to the universal ribosomal protein uS17 family. In terms of assembly, part of the 30S ribosomal subunit.

In terms of biological role, one of the primary rRNA binding proteins, it binds specifically to the 5'-end of 16S ribosomal RNA. The sequence is that of Small ribosomal subunit protein uS17 from Methylocella silvestris (strain DSM 15510 / CIP 108128 / LMG 27833 / NCIMB 13906 / BL2).